The primary structure comprises 414 residues: Tar DNA-binding protein homolog 1 (414 aa).

2 stretches are compositionally biased toward basic and acidic residues: residues 1–44 (MADE…KTTD) and 153–167 (DDGR…RAVE). Disordered stretches follow at residues 1-58 (MADE…GDEP) and 132-167 (SSAD…RAVE). 2 consecutive RRM domains span residues 173 to 259 (VDLI…QGRP) and 262 to 341 (SRIF…IAQP). Positions 343 to 414 (EENNQSVGPD…APGDSRGPGW (72 aa)) are disordered. Residues 361–373 (NRRERDRPDRRPI) show a composition bias toward basic and acidic residues.

As to quaternary structure, interacts with chromobox protein homolog hpl-2; interaction may maintain localization of hpl-2 to gene bodies. As to expression, widely expressed in a range of tissues including body wall muscles, pharynx and neurons of the midbody in adults and larvae.

It localises to the nucleus. Its subcellular location is the cytoplasm. RNA-binding protein which regulates transcription, splicing and RNA-editing. Limits the accumulation of double-stranded RNA by maintaining the abundance of the mature RNA transcripts that are formed from double-stranded precursor RNAs. Stress response protein that acts downstream of daf-16 in the insulin/IGF pathway to regulate longevity and the cellular stress response to osmotic, oxidative, proteotoxic and endoplasmic reticulum stress. Involved in the regulation of physiological processes including aging, fertility, growth and locomotion. Plays a role in maintaining localization of chromobox protein homolog hpl-2 to gene bodies, perhaps acting via binding to nascent RNA transcripts. The chain is Tar DNA-binding protein homolog 1 from Caenorhabditis elegans.